The following is a 45-amino-acid chain: Putative metallothionein-like protein 1B (45 aa).

It belongs to the metallothionein superfamily. Type 15 family.

Its function is as follows. Metallothioneins have a high content of cysteine residues that bind various heavy metals. Confers tolerance to cadmium (Cd) and plays a role in Cd and zinc (Zn) homeostasis. In Arabidopsis thaliana (Mouse-ear cress), this protein is Putative metallothionein-like protein 1B (MT1B).